Consider the following 608-residue polypeptide: Albumin (608 aa).

An N-terminal signal peptide occupies residues 1–18 (MKWVTFLLLLFVSDSAFS). Residues 19-24 (RGLFRR) constitute a propeptide that is removed on maturation. 3 Albumin domains span residues 19–211 (RGLF…ALKE), 212–403 (KALA…EFQP), and 404–601 (LVEE…KLVA). Residue histidine 27 coordinates Cu cation. Serine 29 carries the post-translational modification Phosphoserine. Ca(2+) is bound by residues glutamate 30 and aspartate 37. A disulfide bond links cysteine 77 and cysteine 86. Phosphoserine is present on residues serine 82 and serine 89. Position 91 (histidine 91) interacts with Zn(2+). 6 cysteine pairs are disulfide-bonded: cysteine 99/cysteine 115, cysteine 114/cysteine 125, cysteine 148/cysteine 193, cysteine 192/cysteine 201, cysteine 224/cysteine 270, and cysteine 269/cysteine 277. Position 268 (glutamate 268) interacts with Ca(2+). Zn(2+)-binding residues include histidine 271 and aspartate 273. Positions 273, 276, and 279 each coordinate Ca(2+). Intrachain disulfides connect cysteine 289/cysteine 303, cysteine 302/cysteine 313, cysteine 340/cysteine 385, cysteine 384/cysteine 393, cysteine 416/cysteine 462, cysteine 461/cysteine 472, cysteine 485/cysteine 501, and cysteine 500/cysteine 511. Serine 297 carries the phosphoserine modification. Position 443 is a phosphoserine (serine 443). A phosphothreonine mark is found at threonine 444 and threonine 446. Position 460 is an N6-succinyllysine (lysine 460). Serine 513 carries the phosphoserine modification. Disulfide bonds link cysteine 538–cysteine 583 and cysteine 582–cysteine 591. Lysine 543 bears the N6-succinyllysine mark. Lysine 558 is subject to N6-methyllysine. At threonine 570 the chain carries Phosphothreonine. N6-succinyllysine is present on lysine 588.

It belongs to the ALB/AFP/VDB family. In terms of assembly, interacts with FCGRT; this interaction regulates ALB homeostasis. Interacts with TASOR. In plasma, occurs in a covalently-linked complex with chromophore-bound alpha-1-microglobulin; this interaction does not prevent fatty acid binding to ALB. As to expression, plasma.

It is found in the secreted. In terms of biological role, binds water, Ca(2+), Na(+), K(+), fatty acids, hormones, bilirubin and drugs. Its main function is the regulation of the colloidal osmotic pressure of blood. Major zinc transporter in plasma, typically binds about 80% of all plasma zinc. Major calcium and magnesium transporter in plasma, binds approximately 45% of circulating calcium and magnesium in plasma. Potentially has more than two calcium-binding sites and might additionally bind calcium in a non-specific manner. The shared binding site between zinc and calcium at residue Asp-273 suggests a crosstalk between zinc and calcium transport in the blood. The rank order of affinity is zinc &gt; calcium &gt; magnesium. Binds to the bacterial siderophore enterobactin and inhibits enterobactin-mediated iron uptake of E.coli from ferric transferrin, and may thereby limit the utilization of iron and growth of enteric bacteria such as E.coli. Does not prevent iron uptake by the bacterial siderophore aerobactin. In Mesocricetus auratus (Golden hamster), this protein is Albumin.